The following is a 121-amino-acid chain: ETRYEKFLRQHVDHPRTLGLMGHRYCAVMLARRQVTAPGRPCKPSNTFVHAPAEDLVATCTRPADATGFHSTSTPMDITACRLRGGDTRPPCNYRARQLHHHVRVSCLDGLPVHLAGTHAS.

Substrate contacts are provided by K6 and R9. The active-site Proton acceptor is the H11. Disulfide bonds link C26/C81, C42/C92, and C60/C107. Substrate-binding positions include 43-47 and R82; that span reads KPSNT. The Proton donor role is filled by H114.

It belongs to the pancreatic ribonuclease family.

It is found in the secreted. In terms of biological role, pyrimidine-specific nuclease with preference for C. The sequence is that of Ribonuclease CL2 from Gallus gallus (Chicken).